The following is a 49-amino-acid chain: YLDHGLGAPAPYPDPLEPRREVCELNPDCDELADHIGFQEAYRRFYGIA.

Positions Y1–G47 constitute a Gla domain. Hydroxyproline is present on P9. Ca(2+) contacts are provided by E17, E21, E24, and D30. Residues E17, E21, and E24 each carry the 4-carboxyglutamate modification. An intrachain disulfide couples C23 to C29.

The protein belongs to the osteocalcin/matrix Gla protein family. Post-translationally, gamma-carboxyglutamate residues are formed by vitamin K dependent carboxylation by GGCX. These residues are essential for the binding of calcium. Decarboxylation promotes the hormone activity.

The protein resides in the secreted. Functionally, the carboxylated form is one of the main organic components of the bone matrix, which constitutes 1-2% of the total bone protein. It acts as a negative regulator of bone formation and is required to limit bone formation without impairing bone resorption or mineralization. The carboxylated form binds strongly to apatite and calcium. The uncarboxylated form acts as a hormone secreted by osteoblasts, which regulates different cellular processes, such as energy metabolism, male fertility and brain development. Regulates of energy metabolism by acting as a hormone favoring pancreatic beta-cell proliferation, insulin secretion and sensitivity and energy expenditure. Uncarboxylated osteocalcin hormone also promotes testosterone production in the testes: acts as a ligand for G protein-coupled receptor GPRC6A at the surface of Leydig cells, initiating a signaling response that promotes the expression of enzymes required for testosterone synthesis in a CREB-dependent manner. Also acts as a regulator of brain development: osteocalcin hormone crosses the blood-brain barrier and acts as a ligand for GPR158 on neurons, initiating a signaling response that prevents neuronal apoptosis in the hippocampus, favors the synthesis of all monoamine neurotransmitters and inhibits that of gamma-aminobutyric acid (GABA). Osteocalcin also crosses the placenta during pregnancy and maternal osteocalcin is required for fetal brain development. The sequence is that of Osteocalcin (BGLAP) from Sus scrofa (Pig).